The chain runs to 103 residues: UPF0235 protein Rleg2_3707 (103 aa).

This sequence belongs to the UPF0235 family.

This chain is UPF0235 protein Rleg2_3707, found in Rhizobium leguminosarum bv. trifolii (strain WSM2304).